The primary structure comprises 98 residues: MVWHGFLAKAVPTVVTGAVGVAAYEALRKMVVKAPLRAATVSVAAWGIRLAREAERKAGESAEQARLMFADVLAEASERAGEEVPPLAVAGSDDGHDH.

The disordered stretch occupies residues 77–98 (SERAGEEVPPLAVAGSDDGHDH).

It to M.tuberculosis Rv1991c and Rv3269.

This is an uncharacterized protein from Mycobacterium bovis (strain ATCC BAA-935 / AF2122/97).